The primary structure comprises 61 residues: Large ribosomal subunit protein bL32 (61 aa).

It belongs to the bacterial ribosomal protein bL32 family.

In Ehrlichia canis (strain Jake), this protein is Large ribosomal subunit protein bL32.